The sequence spans 352 residues: Phosphoribosylformylglycinamidine cyclo-ligase (352 aa).

The protein belongs to the AIR synthase family.

It is found in the cytoplasm. The enzyme catalyses 2-formamido-N(1)-(5-O-phospho-beta-D-ribosyl)acetamidine + ATP = 5-amino-1-(5-phospho-beta-D-ribosyl)imidazole + ADP + phosphate + H(+). The protein operates within purine metabolism; IMP biosynthesis via de novo pathway; 5-amino-1-(5-phospho-D-ribosyl)imidazole from N(2)-formyl-N(1)-(5-phospho-D-ribosyl)glycinamide: step 2/2. The protein is Phosphoribosylformylglycinamidine cyclo-ligase of Pseudomonas entomophila (strain L48).